A 134-amino-acid chain; its full sequence is UPF0216 protein AF_0460 (134 aa).

Belongs to the UPF0216 family.

This Archaeoglobus fulgidus (strain ATCC 49558 / DSM 4304 / JCM 9628 / NBRC 100126 / VC-16) protein is UPF0216 protein AF_0460.